Here is a 310-residue protein sequence, read N- to C-terminus: Vomeronasal type-1 receptor 50 (310 aa).

Over 1–16 (MSKANLLHTDNNMKIT) the chain is Extracellular. A helical transmembrane segment spans residues 17 to 37 (LFSEVSVGISANSILFVVHLC). Topologically, residues 38 to 50 (KLLHENKPKPIDL) are cytoplasmic. The helical transmembrane segment at 51–71 (YIAFFSITQLMLLITMGLIAV) threads the bilayer. Residues 72-93 (DMFMPWGRWDSTTCQSLIYLHR) lie on the Extracellular side of the membrane. Cys85 and Cys172 are disulfide-bonded. Residues 94–114 (LLRGLTFCATCLLNVLWTITL) traverse the membrane as a helical segment. Residues 115-134 (SPRSSCLTKFKHKSPHHISG) are Cytoplasmic-facing. A helical membrane pass occupies residues 135-155 (AFLFFCVLYMSFSSHLLVSII). Topologically, residues 156-193 (ATFNSTSDNFLYVTQSCSILPVSYSRTSILSTMMTMRE) are extracellular. Asn159 carries an N-linked (GlcNAc...) asparagine glycan. The helical transmembrane segment at 194–214 (AFLIGLMALSSGYVVVLLWRH) threads the bilayer. Over 215 to 237 (KKQARHLHSTSLSSKASPEQRAT) the chain is Cytoplasmic. The chain crosses the membrane as a helical span at residues 238–258 (STIMLLMGFFVVLYILDTVIF). At 259–269 (QARLKFKDVST) the chain is on the extracellular side. The chain crosses the membrane as a helical span at residues 270 to 290 (FFCVKIIISHSYATFSPFVFI). Topologically, residues 291 to 310 (CNDKYMIKFVTSMCGRIVNV) are cytoplasmic.

The protein belongs to the G-protein coupled receptor 1 family. Expressed in a subset of sensory neurons located in the apical layer of the vomeronasal organ.

It is found in the cell membrane. Putative pheromone receptor implicated in the regulation of social and reproductive behavior. This chain is Vomeronasal type-1 receptor 50 (Vmn1r50), found in Mus musculus (Mouse).